The following is a 175-amino-acid chain: Disulfide bond formation protein B 2 (175 aa).

The Cytoplasmic portion of the chain corresponds to 1–9 (MYLARTRFL). Residues 10–26 (FFLASLACASIIGVAFY) traverse the membrane as a helical segment. Over 27–44 (LQQAVGLDPCTLCMVQRA) the chain is Periplasmic. C36 and C39 are disulfide-bonded. The helical transmembrane segment at 45 to 61 (AFIACGVLALCAACHAP) threads the bilayer. Over 62–68 (GPTGTRR) the chain is Cytoplasmic. Residues 69–85 (YSLGLLLVALAGLAGAG) form a helical membrane-spanning segment. Residues 86 to 142 (TQVWLQTASADQLIPFITRLEQILSLLSLDMCIDRLRSDALFCAEITWTLFGISLPE) lie on the Periplasmic side of the membrane. Residues 143–161 (WSLLAFTGLALLPLYPLFS) form a helical membrane-spanning segment. At 162–175 (ELSHWLATRDRGGY) the chain is on the cytoplasmic side.

The protein belongs to the DsbB family.

It localises to the cell inner membrane. In terms of biological role, required for disulfide bond formation in some periplasmic proteins. Acts by oxidizing the DsbA protein. The protein is Disulfide bond formation protein B 2 of Pseudomonas syringae pv. syringae (strain B728a).